The chain runs to 364 residues: MSATYNFCAGPAMLPQAVMEKAQSELLDWNGLGTSVMEISHRSKEFIALTEQAEIDLRELMSIPSNYHVLFMHGGGRGQFSAVVNNFLGNNGKALYLVDGSWSSAAVDEAKKLAGETQIDTLNIVEKDGATSRVSIPNLKELDQDYRYLHYCPNETVDGIEIFEELDSPWPIVADMSSNIMSREIDVSRYGLIYAGAQKNIGPSGLSIVIVKDELLQLPQLPQSSIMDYRLGVKHGSMYNTPPTFAWYLAAEVFKWLKSSGGVGEVQKANERKAGTLYQFIDSCDFYENRVAVENRSVMNVTFYLKDEALNDEFIKQAKAVGLVALKGHRSVGGMRASIYNAMPLEGVEKLVEFMTDFANKNRA.

Arginine 42 is a binding site for L-glutamate. Residues 76 to 77 (GR), tryptophan 102, threonine 156, aspartate 175, and glutamine 198 contribute to the pyridoxal 5'-phosphate site. Lysine 199 carries the N6-(pyridoxal phosphate)lysine modification. 240–241 (NT) contributes to the pyridoxal 5'-phosphate binding site.

This sequence belongs to the class-V pyridoxal-phosphate-dependent aminotransferase family. SerC subfamily. As to quaternary structure, homodimer. Pyridoxal 5'-phosphate serves as cofactor.

It is found in the cytoplasm. It catalyses the reaction O-phospho-L-serine + 2-oxoglutarate = 3-phosphooxypyruvate + L-glutamate. The enzyme catalyses 4-(phosphooxy)-L-threonine + 2-oxoglutarate = (R)-3-hydroxy-2-oxo-4-phosphooxybutanoate + L-glutamate. It functions in the pathway amino-acid biosynthesis; L-serine biosynthesis; L-serine from 3-phospho-D-glycerate: step 2/3. It participates in cofactor biosynthesis; pyridoxine 5'-phosphate biosynthesis; pyridoxine 5'-phosphate from D-erythrose 4-phosphate: step 3/5. Functionally, catalyzes the reversible conversion of 3-phosphohydroxypyruvate to phosphoserine and of 3-hydroxy-2-oxo-4-phosphonooxybutanoate to phosphohydroxythreonine. The chain is Phosphoserine aminotransferase from Shewanella woodyi (strain ATCC 51908 / MS32).